Here is a 376-residue protein sequence, read N- to C-terminus: Probable deoxyhypusine synthase (376 aa).

NAD(+)-binding positions include 105 to 109, 131 to 133, Glu137, and Asp238; these read SNLVS and TAG. Spermidine is bound at residue 136–137; that stretch reads EE. Asp243 serves as a coordination point for spermidine. Gly283 contacts NAD(+). His288 provides a ligand contact to spermidine. 308–309 contributes to the NAD(+) binding site; that stretch reads TG. Residues 314–316 and 323–329 contribute to the spermidine site; these read GSD and EAVSWGK. The active-site Nucleophile is the Lys329. Residue 342–343 coordinates NAD(+); it reads EA.

The protein belongs to the deoxyhypusine synthase family. It depends on NAD(+) as a cofactor.

It catalyses the reaction [eIF5A protein]-L-lysine + spermidine = [eIF5A protein]-deoxyhypusine + propane-1,3-diamine. The protein operates within protein modification; eIF5A hypusination. Its function is as follows. Catalyzes the NAD-dependent oxidative cleavage of spermidine and the subsequent transfer of the butylamine moiety of spermidine to the epsilon-amino group of a critical lysine residue of the eIF-5A precursor protein to form the intermediate deoxyhypusine residue. This is the first step of the post-translational modification of that lysine into an unusual amino acid residue named hypusine. Hypusination is unique to mature eIF-5A factor and is essential for its function. In Dictyostelium discoideum (Social amoeba), this protein is Probable deoxyhypusine synthase (dhps).